Reading from the N-terminus, the 875-residue chain is SPbeta prophage-derived uncharacterized protein YomG (875 aa).

Positions 351-381 (AKKAEISRINSQITNISQEIEKLKDRLSMDK) form a coiled coil. The Fibronectin type-III domain maps to 537 to 648 (PVANPTILNN…SIDSSGRILS (112 aa)).

The protein is SPbeta prophage-derived uncharacterized protein YomG (yomG) of Bacillus subtilis (strain 168).